The chain runs to 419 residues: Endothiapepsin (419 aa).

The signal sequence occupies residues 1–20 (MSSPLKNALVTAMLAGGALS). Positions 21–89 (SPTKQHVGIP…QNSTSGLAER (69 aa)) are cleaved as a propeptide — activation peptide. The Peptidase A1 domain occupies 106–417 (YITPVQIGTP…GATTPTLGFA (312 aa)). Catalysis depends on residues aspartate 124 and serine 288. A disulfide bridge connects residues cysteine 344 and cysteine 379.

The protein belongs to the peptidase A1 family.

The enzyme catalyses Hydrolysis of proteins with specificity similar to that of pepsin A, prefers hydrophobic residues at P1 and P1', but does not cleave 14-Ala-|-Leu-15 in the B chain of insulin or Z-Glu-Tyr. Clots milk.. The polypeptide is Endothiapepsin (EAPA) (Cryphonectria parasitica (Chestnut blight fungus)).